Reading from the N-terminus, the 736-residue chain is MAETKVIYHLDEEETPYLVKVPVPATDIRLRDFKAALGRGHAKYFFKAMDQDFGVVKEEISDDNAKLPCFNDRVVSWLASSEGSQPDSAPPAPATEVRPEPPPPVPPPIPPPPAERTSGIGDSRPPSFHPNVSGSTEQLDQDNESVISMRRDRVRRRESSEQAGVGRGVNGRTERHLSGYESSSTLLTSEIETSICDSEEDDTMSRFSSSTEQSSASRLLKRHRRRRKQRPPRLERTSSFSSVTDSTMSLNIITVTLNMEKYNFLGISIVGQSNERGDGGIYIGSIMKGGAVAADGRIEPGDMLLQVNDINFENMSNDDAVRVLRDIVHKPGPIVLTVAKCWDPSPQGYFTLPRNEPIHPIDPAAWVSHSAALSGSFPVYPGSASMSSMTSSTSVTETELSHALPPVSLFSLSVHTDLASVVKVMASPESGLEVRDRMWLKITIPNAFLGSDVVDWLYHHVEGFQDRREARKFASNLLKAGFIRHTVNKITFSEQCYYIFGDLTGCENYMTNLSLNDNDGSSGASDQDTLAPLPLPGASPWPLLPTFSYQYQAPHPYSTQPPAYHELSSYSYGMGSAGSQHSEGSRSSGSNRSDGGRGMQKDDRSGVAGVGGGDSKSGSGSESEYSTRSSIRRVGGGEAGPPSERSTSSRLPPHHPPSVHSYAAPGVPLSYNPMMLMMMPPPPLPPPGVCPPNSSVPPGAPPLVRDLASVPPELTATRQSFHMAMGNPSEFFVDVM.

The DIX domain occupies 1–82; the sequence is MAETKVIYHL…RVVSWLASSE (82 aa). Residues 79–241 are disordered; sequence ASSEGSQPDS…PRLERTSSFS (163 aa). A compositionally biased stretch (pro residues) spans 100–114; it reads EPPPPVPPPIPPPPA. Positions 149 to 160 are enriched in basic and acidic residues; the sequence is MRRDRVRRRESS. Low complexity predominate over residues 181–195; sequence ESSSTLLTSEIETSI. A compositionally biased stretch (polar residues) spans 205–217; sequence SRFSSSTEQSSAS. The segment covering 219–231 has biased composition (basic residues); that stretch reads LLKRHRRRRKQRP. The 73-residue stretch at 254–326 folds into the PDZ domain; it reads TVTLNMEKYN…NDDAVRVLRD (73 aa). The tract at residues 327–427 is interaction with custos; the sequence is IVHKPGPIVL…LASVVKVMAS (101 aa). The DEP domain occupies 428–502; sequence PESGLEVRDR…SEQCYYIFGD (75 aa). 2 stretches are compositionally biased toward low complexity: residues 574 to 593 and 616 to 629; these read MGSA…SNRS and KSGS…STRS. A disordered region spans residues 574–664; sequence MGSAGSQHSE…HPPSVHSYAA (91 aa).

The protein belongs to the DSH family. In terms of assembly, can form homomultimers. Interacts with prickle1. Interacts (via PDZ domain) with ccdc88c/dal and dact1-B/dpr. Interacts (via DIX domain) with ARP/Axin-related protein and dact1-A/frodo. Interacts with sdc4, possibly via fz7. Interacts directly (via DEP domain) with efnb1/ephrin-B1 and indirectly with the phosphorylated ephrin receptors ephb1 and ephb2, via association with SH domain-containing adapters. May interact with lrrc6. Interacts with custos (via NLS1 and NLS2); the interaction is negatively regulated by Wnt stimulation. Phosphorylated. Phosphorylation is controlled by frizzled proteins, correlates with the onset of embryo dorsalizing events and is higher in the dorsal half of early cleavage embryos. Phosphorylated on tyrosine residues in response to association with efnb1/ephrin-B1. In terms of tissue distribution, expressed equally in both animal-vegetal and dorsal-ventral directions of the early blastula. Becomes enriched on the dorsal side of the embryo after cortical rotation. Expressed along the anterior margin of eye field of neurulae (stage 16 embryos) and in the anterolateral crescent that borders the eye field. Continues to be expressed in the optic cup at stage 26. Expressed in the central nervous system throughout the early tailbud stage including the entire hindbrain.

It is found in the cytoplasm. The protein resides in the cytoplasmic vesicle. The protein localises to the cell projection. It localises to the cilium. Its subcellular location is the nucleus. It is found in the cell membrane. Functionally, involved in at least 2 independent signaling cascades, controlling cell fate via canonical Wnt signaling and cell polarity via a planar cell polarity (PCP) cascade. Acts synergistically with dal/dapple-like to activate Wnt signaling, stabilizing ctnnb1/beta-catenin and leading to dorsal axis formation. Also prevents degradation of ctnnb1/beta-catenin by displacing gsk3 from a complex with ARP/Axin-related protein. Has an additional role in anterior-posterior (A/P) axis formation, specifying different neuroectodermal cell fates along the A/P axis in a dose-dependent manner by activating several early patterning genes. In the PCP pathway, required at the cell membrane for PCP-mediated neural and mesodermal convergent extension during gastrulation and subsequent neural tube closure, acting to activate jnk. Also involved in blastopore closure and archenteron elongation during early, but not late, gastrulation. Associates with ephrin receptors and ligands and acts as part of a downstream PCP pathway to mediate ephrin-mediated cell repulsion via activation of rhoa. Required for efnb1/ephrin-B1-driven movement of non-retinal progenitor cells into the retina during eye field formation. Patterns the hindbrain. Required for ciliogenesis. Controls the docking of basal bodies to the apical plasma membrane; mediates the activation, but not localization of rhoa at the apical surface of ciliated cells during basal body docking. Furthermore, required for the association of basal bodies with membrane-bound vesicles and the vesicle-trafficking protein exoc4/sec8, and this association is in turn required for basal body docking. Once basal bodies are docked, required for the planar polarization of basal bodies that underlies ciliary beating and the directional fluid flow across ciliated epithelia. This Xenopus laevis (African clawed frog) protein is Segment polarity protein dishevelled homolog DVL-2 (dvl2).